The sequence spans 189 residues: Peptidyl-tRNA hydrolase (189 aa).

Tyr18 is a binding site for tRNA. Residue His23 is the Proton acceptor of the active site. TRNA is bound by residues Phe67, Asn69, and Asn115.

This sequence belongs to the PTH family. Monomer.

It localises to the cytoplasm. It catalyses the reaction an N-acyl-L-alpha-aminoacyl-tRNA + H2O = an N-acyl-L-amino acid + a tRNA + H(+). Its function is as follows. Hydrolyzes ribosome-free peptidyl-tRNAs (with 1 or more amino acids incorporated), which drop off the ribosome during protein synthesis, or as a result of ribosome stalling. Functionally, catalyzes the release of premature peptidyl moieties from peptidyl-tRNA molecules trapped in stalled 50S ribosomal subunits, and thus maintains levels of free tRNAs and 50S ribosomes. This Leptospira borgpetersenii serovar Hardjo-bovis (strain JB197) protein is Peptidyl-tRNA hydrolase.